Here is a 33-residue protein sequence, read N- to C-terminus: Protamine-1B (33 aa).

A disordered region spans residues 1 to 33; it reads PRRRRRRSSSRPIRRRRPRRVSRRRRRGGRRRR.

As to expression, testis.

Its subcellular location is the nucleus. The protein localises to the chromosome. Its function is as follows. Protamines substitute for histones in the chromatin of sperm during the haploid phase of spermatogenesis. They compact sperm DNA into a highly condensed, stable and inactive complex. In Oncorhynchus mykiss (Rainbow trout), this protein is Protamine-1B.